The following is a 355-amino-acid chain: Probable nitronate monooxygenase (355 aa).

Residues N71, Q175, G180, G218, and 237 to 240 (QMGT) each bind FMN.

Belongs to the nitronate monooxygenase family. NMO class I subfamily. FMN is required as a cofactor.

It catalyses the reaction 3 propionate 3-nitronate + 3 O2 + H2O = 3 3-oxopropanoate + 2 nitrate + nitrite + H2O2 + 3 H(+). Its function is as follows. Nitronate monooxygenase that uses molecular oxygen to catalyze the oxidative denitrification of alkyl nitronates. Acts on propionate 3-nitronate (P3N), the presumed physiological substrate. Probably functions in the detoxification of P3N, a metabolic poison produced by plants and fungi as a defense mechanism. The sequence is that of Probable nitronate monooxygenase from Staphylococcus aureus (strain JH1).